Reading from the N-terminus, the 550-residue chain is Dihydroxy-acid dehydratase (550 aa).

Aspartate 78 is a binding site for Mg(2+). [2Fe-2S] cluster is bound at residue cysteine 119. Residues aspartate 120 and lysine 121 each contribute to the Mg(2+) site. Lysine 121 is subject to N6-carboxylysine. Residue cysteine 191 participates in [2Fe-2S] cluster binding. Residue glutamate 440 participates in Mg(2+) binding. Serine 466 acts as the Proton acceptor in catalysis.

It belongs to the IlvD/Edd family. In terms of assembly, homodimer. It depends on [2Fe-2S] cluster as a cofactor. Requires Mg(2+) as cofactor.

The catalysed reaction is (2R)-2,3-dihydroxy-3-methylbutanoate = 3-methyl-2-oxobutanoate + H2O. It catalyses the reaction (2R,3R)-2,3-dihydroxy-3-methylpentanoate = (S)-3-methyl-2-oxopentanoate + H2O. Its pathway is amino-acid biosynthesis; L-isoleucine biosynthesis; L-isoleucine from 2-oxobutanoate: step 3/4. It participates in amino-acid biosynthesis; L-valine biosynthesis; L-valine from pyruvate: step 3/4. Functions in the biosynthesis of branched-chain amino acids. Catalyzes the dehydration of (2R,3R)-2,3-dihydroxy-3-methylpentanoate (2,3-dihydroxy-3-methylvalerate) into 2-oxo-3-methylpentanoate (2-oxo-3-methylvalerate) and of (2R)-2,3-dihydroxy-3-methylbutanoate (2,3-dihydroxyisovalerate) into 2-oxo-3-methylbutanoate (2-oxoisovalerate), the penultimate precursor to L-isoleucine and L-valine, respectively. The polypeptide is Dihydroxy-acid dehydratase (Methanococcus vannielii (strain ATCC 35089 / DSM 1224 / JCM 13029 / OCM 148 / SB)).